A 255-amino-acid polypeptide reads, in one-letter code: Aprataxin and PNK-like factor (255 aa).

Low complexity predominate over residues 1 to 11 (MSATDASTADS). 3 disordered regions span residues 1–117 (MSAT…VSSS), 131–168 (RRNP…FGNA), and 195–255 (RLRQ…DDYD). Basic and acidic residues-rich tracts occupy residues 12–22 (GAKRKSSEDIT), 40–64 (KSEE…KAEP), and 137–150 (RSAE…DYRR). PBZ-type zinc fingers lie at residues 121-142 (TSCR…AEAH) and 161-182 (PACP…DYSH). Over residues 207–218 (DDSGTDEEDEPF) the composition is skewed to acidic residues. The span at 221 to 230 (DNDRDADYRP) shows a compositional bias: basic and acidic residues. Over residues 234–244 (INEDEDDELEF) the composition is skewed to acidic residues.

This sequence belongs to the APLF family.

Functionally, displays apurinic-apyrimidinic (AP) endonuclease and 3'-5' exonuclease activities in vitro. This chain is Aprataxin and PNK-like factor, found in Drosophila melanogaster (Fruit fly).